The following is a 486-amino-acid chain: Differentially expressed in FDCP 8 homolog (486 aa).

The tract at residues 1–26 is disordered; the sequence is MSSWCSSEDAHNQSSTPSTRSRKSSW. Phorbol-ester/DAG-type zinc fingers lie at residues 160 to 212 and 393 to 459; these read GHEF…KRVC and IHTV…SLNC.

This sequence belongs to the DEF8 family.

The chain is Differentially expressed in FDCP 8 homolog from Caenorhabditis elegans.